Consider the following 334-residue polypeptide: Formylmethanofuran--tetrahydromethanopterin formyltransferase (334 aa).

The protein belongs to the FTR family. As to quaternary structure, homotetramer.

The protein localises to the cytoplasm. The enzyme catalyses N-formylmethanofuran + 5,6,7,8-tetrahydromethanopterin + H(+) = N(5)-formyl-5,6,7,8-tetrahydromethanopterin + methanofuran. The protein operates within one-carbon metabolism; formaldehyde degradation; formate from formaldehyde (H(4)MPT route): step 4/5. Catalyzes the transfer of a formyl group from 5-formyl tetrahydromethanopterin (5-formyl-H(4)MPT) to methanofuran (MFR) to produce formylmethanofuran (formyl-MFR) and tetrahydromethanopterin (H(4)MPT). In Rhodopirellula baltica (strain DSM 10527 / NCIMB 13988 / SH1), this protein is Formylmethanofuran--tetrahydromethanopterin formyltransferase.